A 398-amino-acid chain; its full sequence is GTP cyclohydrolase-2 (398 aa).

The unknown stretch occupies residues 1–172 (MNTPTHTHPH…TAAACASTTE (172 aa)). The segment at 173–398 (YELVTRTPVP…VKPIAKTGHA (226 aa)) is GTP cyclohydrolase II. 220–224 (RVHSS) provides a ligand contact to GTP. Residues C225, C236, and C238 each contribute to the Zn(2+) site. Residues Q241, 263–265 (EGR), and T285 each bind GTP. The Proton acceptor role is filled by D297. R299 (nucleophile) is an active-site residue. Residues S320 and K325 each coordinate GTP. The interval 375-398 (QRPQDPSETVDGETVKPIAKTGHA) is disordered.

In the C-terminal section; belongs to the GTP cyclohydrolase II family. Requires Zn(2+) as cofactor.

It carries out the reaction GTP + 4 H2O = 2,5-diamino-6-hydroxy-4-(5-phosphoribosylamino)-pyrimidine + formate + 2 phosphate + 3 H(+). It participates in cofactor biosynthesis; riboflavin biosynthesis; 5-amino-6-(D-ribitylamino)uracil from GTP: step 1/4. Its function is as follows. Catalyzes the conversion of GTP to 2,5-diamino-6-ribosylamino-4(3H)-pyrimidinone 5'-phosphate (DARP), formate and pyrophosphate. This Xylella fastidiosa (strain Temecula1 / ATCC 700964) protein is GTP cyclohydrolase-2 (ribA).